The following is a 378-amino-acid chain: Ribosomal RNA large subunit methyltransferase G (378 aa).

The protein belongs to the methyltransferase superfamily. RlmG family.

The protein localises to the cytoplasm. It catalyses the reaction guanosine(1835) in 23S rRNA + S-adenosyl-L-methionine = N(2)-methylguanosine(1835) in 23S rRNA + S-adenosyl-L-homocysteine + H(+). Specifically methylates the guanine in position 1835 (m2G1835) of 23S rRNA. The chain is Ribosomal RNA large subunit methyltransferase G from Escherichia coli O139:H28 (strain E24377A / ETEC).